A 300-amino-acid polypeptide reads, in one-letter code: Ribosomal RNA small subunit methyltransferase H (300 aa).

S-adenosyl-L-methionine-binding positions include 46-48 (GGH), aspartate 65, phenylalanine 92, aspartate 107, and glutamine 114.

The protein belongs to the methyltransferase superfamily. RsmH family.

The protein localises to the cytoplasm. The enzyme catalyses cytidine(1402) in 16S rRNA + S-adenosyl-L-methionine = N(4)-methylcytidine(1402) in 16S rRNA + S-adenosyl-L-homocysteine + H(+). In terms of biological role, specifically methylates the N4 position of cytidine in position 1402 (C1402) of 16S rRNA. This Prochlorococcus marinus (strain AS9601) protein is Ribosomal RNA small subunit methyltransferase H.